A 224-amino-acid polypeptide reads, in one-letter code: Deoxyribose-phosphate aldolase (224 aa).

The Proton donor/acceptor role is filled by Asp92. Lys155 acts as the Schiff-base intermediate with acetaldehyde in catalysis. Lys184 acts as the Proton donor/acceptor in catalysis.

This sequence belongs to the DeoC/FbaB aldolase family. DeoC type 1 subfamily.

Its subcellular location is the cytoplasm. The enzyme catalyses 2-deoxy-D-ribose 5-phosphate = D-glyceraldehyde 3-phosphate + acetaldehyde. Its pathway is carbohydrate degradation; 2-deoxy-D-ribose 1-phosphate degradation; D-glyceraldehyde 3-phosphate and acetaldehyde from 2-deoxy-alpha-D-ribose 1-phosphate: step 2/2. Functionally, catalyzes a reversible aldol reaction between acetaldehyde and D-glyceraldehyde 3-phosphate to generate 2-deoxy-D-ribose 5-phosphate. This chain is Deoxyribose-phosphate aldolase, found in Clostridium perfringens (strain 13 / Type A).